Here is a 525-residue protein sequence, read N- to C-terminus: Probable protein kinase UbiB (525 aa).

Positions 118–500 (EFERVPVASA…QRRTNRLLQA (383 aa)) constitute a Protein kinase domain. ATP is bound by residues 124 to 132 (VASASIAQV) and Lys-150. Asp-285 acts as the Proton acceptor in catalysis. A helical membrane pass occupies residues 501–521 (LLVFGLAVGAGAVIARVLIVL).

Belongs to the ABC1 family. UbiB subfamily.

Its subcellular location is the cell inner membrane. It participates in cofactor biosynthesis; ubiquinone biosynthesis [regulation]. In terms of biological role, is probably a protein kinase regulator of UbiI activity which is involved in aerobic coenzyme Q (ubiquinone) biosynthesis. The chain is Probable protein kinase UbiB from Burkholderia mallei (strain SAVP1).